The chain runs to 295 residues: Glutamyl-Q tRNA(Asp) synthetase (295 aa).

L-glutamate contacts are provided by residues 9–13 (RFAPT) and Glu45. Positions 12–22 (PTPSGYLHFGS) match the 'HIGH' region motif. Zn(2+) contacts are provided by Cys101, Cys103, Tyr115, and Cys119. L-glutamate-binding residues include Tyr172 and Arg190. The short motif at 228–232 (KLGKS) is the 'KMSKS' region element. Lys231 provides a ligand contact to ATP.

It belongs to the class-I aminoacyl-tRNA synthetase family. GluQ subfamily. Zn(2+) serves as cofactor.

Catalyzes the tRNA-independent activation of glutamate in presence of ATP and the subsequent transfer of glutamate onto a tRNA(Asp). Glutamate is transferred on the 2-amino-5-(4,5-dihydroxy-2-cyclopenten-1-yl) moiety of the queuosine in the wobble position of the QUC anticodon. In Pseudomonas syringae pv. tomato (strain ATCC BAA-871 / DC3000), this protein is Glutamyl-Q tRNA(Asp) synthetase.